Consider the following 606-residue polypeptide: Protein couch potato (606 aa).

Positions 81–105 (IKRRPTLPQTPASAPQVLSPSPKRQ) match the Nuclear localization signal motif. 7 repeat units span residues 91–95 (PASAP), 109–113 (AVSVL), 114–118 (PVTVP), 122–126 (PVSVP), 128–132 (PVSVP), 134–138 (PVSVK), and 159–163 (PISHP). The segment at 91 to 164 (PASAPQVLSP…SHSHPISHPH (74 aa)) is 7 X 5 AA approximate repeats of P-V-S-V-P. Disordered stretches follow at residues 147-166 (QIAH…PHHH), 282-311 (QQQQ…AGAA), 324-365 (VPTT…TSAA), and 388-410 (PATS…NSNS). Low complexity predominate over residues 344 to 365 (SNSATASAPTTPSPAGSVTSAA). Residues 442–524 (RTLFVSGLPM…QTIRLEFAKS (83 aa)) enclose the RRM domain.

In terms of tissue distribution, expressed in neural precursors and their daughter cells in the embryonic peripheral nervous system. Less abundant in a number of glial cells in the peripheral and central nervous systems and also present at low levels in the developing gut.

The protein localises to the nucleus. May play a role in the development or function of the peripheral nervous system by regulating the processing of nervous system-specific transcripts. The polypeptide is Protein couch potato (cpo) (Drosophila melanogaster (Fruit fly)).